A 444-amino-acid polypeptide reads, in one-letter code: Tubulin beta chain (444 aa).

Positions 11, 69, 138, 142, 143, 144, 204, and 226 each coordinate GTP. A Mg(2+)-binding site is contributed by E69. The disordered stretch occupies residues Q423–V444. Residues T429–V444 show a composition bias toward acidic residues.

This sequence belongs to the tubulin family. In terms of assembly, dimer of alpha and beta chains. A typical microtubule is a hollow water-filled tube with an outer diameter of 25 nm and an inner diameter of 15 nM. Alpha-beta heterodimers associate head-to-tail to form protofilaments running lengthwise along the microtubule wall with the beta-tubulin subunit facing the microtubule plus end conferring a structural polarity. Microtubules usually have 13 protofilaments but different protofilament numbers can be found in some organisms and specialized cells. The cofactor is Mg(2+).

Its subcellular location is the cytoplasm. It localises to the cytoskeleton. Functionally, tubulin is the major constituent of microtubules, a cylinder consisting of laterally associated linear protofilaments composed of alpha- and beta-tubulin heterodimers. Microtubules grow by the addition of GTP-tubulin dimers to the microtubule end, where a stabilizing cap forms. Below the cap, tubulin dimers are in GDP-bound state, owing to GTPase activity of alpha-tubulin. The sequence is that of Tubulin beta chain from Euplotes focardii.